A 160-amino-acid polypeptide reads, in one-letter code: Tumor suppressor ARF (160 aa).

Residues 1–63 are interaction with CDK5RAP3 and MDM2; it reads MGRRFVVTVR…RRGPQPHPGP (63 aa). Disordered regions lie at residues 49–74 and 90–116; these read PERI…QSGS and HPLP…GRGA.

Does not interact with cyclins, CDK1, CDK2, CDK4, CDK5 or CDK6. Binds to BCL6, E2F1, HUWE1, MDM2, MYC, NPM1/B23, TOP1/TOPOI and UBE2I/UBC9. Interacts with TBRG1 and COMMD1. Interacts with CDKN2AIP and E4F1. Interacts with CDK5RAP3 and MDM2; form a ternary complex involved in regulation of p53/TP53. Interacts with NOP53; the interaction is direct and promotes ARF nucleoplasmic relocalization and ubiquitin-mediated proteasomal degradation. Interacts with TTF1 (via the N-terminal region (NRD) and a C-terminal region); the interaction is direct and inhibits the nucleolar localization of TTF1. Post-translationally, ubiquitinated in normal cells by TRIP12 via the ubiquitin fusion degradation (UFD) pathway, a process that mediates ubiquitination at the N-terminus, regardless of the absence of lysine residues. Ubiquitination leads to its proteasomal degradation. In cancer cells, however, TRIP12 is located in a different cell compartment, preventing ubiquitination and degradation. In terms of tissue distribution, widely expressed with very low levels in kidney and colon.

It localises to the nucleus. It is found in the nucleolus. The protein localises to the nucleoplasm. Functionally, capable of inducing cell cycle arrest in G1 and G2 phases. Acts as a tumor suppressor. Binds to MDM2 and blocks its nucleocytoplasmic shuttling by sequestering it in the nucleolus. This inhibits the oncogenic action of MDM2 by blocking MDM2-induced degradation of p53 and enhancing p53-dependent transactivation and apoptosis. Also induces G2 arrest and apoptosis in a p53-independent manner by preventing the activation of cyclin B1/CDC2 complexes. Binds to BCL6 and down-regulates BCL6-induced transcriptional repression. Binds to E2F1 and MYC and blocks their transcriptional activator activity but has no effect on MYC transcriptional repression. Binds to TOP1/TOPOI and stimulates its activity. This complex binds to rRNA gene promoters and may play a role in rRNA transcription and/or maturation. Interacts with NPM1/B23 and promotes its polyubiquitination and degradation, thus inhibiting rRNA processing. Plays a role in inhibiting ribosome biogenesis, perhaps by binding to the nucleolar localization sequence of transcription termination factor TTF1, and thereby preventing nucleolar localization of TTF1. Interacts with COMMD1 and promotes its 'Lys63'-linked polyubiquitination. Interacts with UBE2I/UBC9 and enhances sumoylation of a number of its binding partners including MDM2 and E2F1. Binds to HUWE1 and represses its ubiquitin ligase activity. May play a role in controlling cell proliferation and apoptosis during mammary gland development. The polypeptide is Tumor suppressor ARF (Rattus norvegicus (Rat)).